A 367-amino-acid polypeptide reads, in one-letter code: Peptide chain release factor 2 (367 aa).

Gln254 carries the N5-methylglutamine modification.

It belongs to the prokaryotic/mitochondrial release factor family. In terms of processing, methylated by PrmC. Methylation increases the termination efficiency of RF2.

Its subcellular location is the cytoplasm. Its function is as follows. Peptide chain release factor 2 directs the termination of translation in response to the peptide chain termination codons UGA and UAA. This Bordetella bronchiseptica (strain ATCC BAA-588 / NCTC 13252 / RB50) (Alcaligenes bronchisepticus) protein is Peptide chain release factor 2.